We begin with the raw amino-acid sequence, 1165 residues long: Leptin receptor (1165 aa).

An N-terminal signal peptide occupies residues 1–21; sequence MTCPKFSVALLHWEFIYVITA. The Extracellular segment spans residues 22–838; sequence FDLAYPITPW…TQDGEKHRND (817 aa). 5 cysteine pairs are disulfide-bonded: Cys37–Cys90, Cys89–Cys99, Cys131–Cys142, Cys186–Cys196, and Cys188–Cys193. N-linked (GlcNAc...) asparagine glycans are attached at residues Asn41, Asn55, Asn72, Asn80, and Asn98. Asn187 carries an N-linked (GlcNAc...) asparagine glycan. N-linked (GlcNAc...) asparagine glycosylation is found at Asn206, Asn276, Asn347, and Asn397. The 94-residue stretch at 239–332 folds into the Fibronectin type-III 1 domain; the sequence is PPLGLHMEIT…STPFTFTTQD (94 aa). 2 cysteine pairs are disulfide-bonded: Cys352/Cys412 and Cys413/Cys418. An N-linked (GlcNAc...) asparagine glycan is attached at Asn433. Disulfide bonds link Cys436–Cys447, Cys473–Cys528, and Cys488–Cys498. Residues 467–484 form a leptin-binding region; that stretch reads HRSSLYCSDVPSVHPISE. Fibronectin type-III domains are found at residues 539-634, 642-736, and 740-834; these read PPSS…TVVT, GPEF…WPMS, and IVQS…DGEK. The WSXWS motif motif lies at 622–626; sequence WSNWS. N-linked (GlcNAc...) asparagine glycans are attached at residues Asn624, Asn659, Asn670, Asn697, Asn728, and Asn750. Residues 839–861 form a helical membrane-spanning segment; that stretch reads AGLYVIVPIIISSSILLLGTLLM. Residues 862-1165 are Cytoplasmic-facing; it reads SHQRMKKLFW…MENKMYDLTV (304 aa). The Box 1 motif signature appears at 870–878; it reads FWEDVPNPK. Ser881 carries the post-translational modification Phosphoserine. The tract at residues 892–897 is required for JAK2 activation; that stretch reads ETFEHL. The segment at 897-905 is required for STAT3 phosphorylation; it reads LFIKHTESV. Tyr986 bears the Phosphotyrosine; by JAK2 mark. Tyr1079 is subject to Phosphotyrosine. Tyr1141 bears the Phosphotyrosine; by JAK2 mark.

The protein belongs to the type I cytokine receptor family. Type 2 subfamily. In terms of assembly, present as a mixture of monomers and dimers. The phosphorylated receptor binds a number of SH2 domain-containing proteins such as JAK2, STAT3, PTPN11, and SOCS3. Interaction with SOCS3 inhibits JAK/STAT signaling and MAPK cascade. Post-translationally, on ligand binding, phosphorylated on two conserved C-terminal tyrosine residues by JAK2. Tyr-986 is required for complete binding and activation of PTPN11, ERK/FOS activation,for interaction with SOCS3 and SOCS3 mediated inhibition of leptin signaling. Phosphorylation on Tyr-1141 is required for STAT3 binding/activation. Phosphorylation of Tyr-1079 has a more accessory role. In terms of tissue distribution, kidney, liver, spleen, lung, brain, testis, uterus, ovary, corpus luteum, theca and granulosa cells.

Its subcellular location is the cell membrane. It is found in the basolateral cell membrane. Receptor for hormone LEP/leptin. On ligand binding, mediates LEP central and peripheral effects through the activation of different signaling pathways such as JAK2/STAT3 and MAPK cascade/FOS. In the hypothalamus, LEP acts as an appetite-regulating factor that induces a decrease in food intake and an increase in energy consumption by inducing anorexinogenic factors and suppressing orexigenic neuropeptides, also regulates bone mass and secretion of hypothalamo-pituitary-adrenal hormones. In the periphery, increases basal metabolism, influences reproductive function, regulates pancreatic beta-cell function and insulin secretion, is pro-angiogenic and affects innate and adaptive immunity. Control of energy homeostasis and melanocortin production (stimulation of POMC and full repression of AgRP transcription) is mediated by STAT3 signaling, whereas distinct signals regulate NPY and the control of fertility, growth and glucose homeostasis. Involved in the regulation of counter-regulatory response to hypoglycemia by inhibiting neurons of the parabrachial nucleus. Has a specific effect on T lymphocyte responses, differentially regulating the proliferation of naive and memory T-cells. Leptin increases Th1 and suppresses Th2 cytokine production. This is Leptin receptor (LEPR) from Sus scrofa (Pig).